A 1407-amino-acid polypeptide reads, in one-letter code: E3 ubiquitin-protein ligase linker protein MMS1 (1407 aa).

The required for interaction with MMS22 stretch occupies residues 1–600 (MLGLRTHGLD…QFQIFRHLRI (600 aa)). The residue at position 1294 (Thr1294) is a Phosphothreonine.

Component of multiple cullin-RING ligases (CRLs) composed of 4 subunits: the RING protein HRT1, the cullin RTT101, a linker protein MMS1, and one of many alternative substrate receptors belonging to a protein family described as DCAF (DDB1- and CUL4-associated factor). Component of a RTT101(MMS1-MMS22) complex with the substrate receptor MMS22. This complex further interacts with RTT107 and CTF4 to form RTT101-MMS1-MMS22-RTT107 and RTT101-MMS1-MMS22-CTF4 complexes respectively. Component of a RTT101(MSS1-CRT10) complex with the substrate receptor CRT10. Component of a RTT101(MSS1-ESC2) complex with the potential substrate receptor ESC2. Component of a RTT101(MSS1-ORC5) complex with the potential substrate receptor ORC5. Interacts with RTT101 (via N-ter). Interacts (via N-ter) with MMS22 (via C-ter). Interacts with CRT10.

It localises to the nucleus. In terms of biological role, component of multiple cullin-RING-based E3 ubiquitin-protein ligase complexes (CRLs), which mediate the ubiquitination of target proteins. The CRL associates with CDC34 as the E2 ubiquitin-conjugating enzyme. The functional specificity of the CRL depends on the type of the associated substrate receptor protein. RTT101(MMS1-MMS22) promotes fork progression through damaged DNA or natural pause sites by stabilizing replication proteins like the replication fork-pausing complex (FPC) and leading-strand polymerase at stalled replication forks. RTT101(MMS1-MMS22) ubiquitinates the acetylated histones H3K56ac-H4 at lysine residues H3K121, H3K122 and H3K125. Ubiquitination is required for efficient histone deposition during replication-coupled nucleosome assembly, probably by facilitating the transfer of H3-H4 from ASF1 to other chaperones involved in histone deposition. RTT101(MMS1-CRT10) may regulate nucleotide synthesis through transcriptional regulation of ribonucleotide reductase. RTT101(MMS1) is also involved in the non-functional rRNA decay (NRD) of 25S rRNA through the selective, ubiquitination-dependent degradation of nonfunctional ribosomal particles. Involved in the regulation of TY1 transposition. This is E3 ubiquitin-protein ligase linker protein MMS1 (MMS1) from Saccharomyces cerevisiae (strain ATCC 204508 / S288c) (Baker's yeast).